A 568-amino-acid polypeptide reads, in one-letter code: COMPASS component cclA (568 aa).

Residues 1–113 form a disordered region; that stretch reads MASDSGTPPP…MRYKLAPPKP (113 aa). Basic and acidic residues-rich tracts occupy residues 68–77 and 89–98; these read KESLKKRESK and PDPKHREPKQ. Positions 160–353 constitute a B30.2/SPRY domain; sequence ADPGFPSSLY…IPIRFKQHIY (194 aa).

It belongs to the cclA family. In terms of assembly, component of the COMPASS complex.

It is found in the nucleus. The protein localises to the chromosome. It localises to the telomere. Its function is as follows. Component of the COMPASS (Set1C) complex that specifically mono-, di- and trimethylates histone H3 to form H3K4me1/2/3, which subsequently plays a role in telomere length maintenance and transcription elongation regulation. Controls the production of several secondary metabolites, including colletochlorins, higginsianins and sclerosporide. Plays a key role in mycelial growth, sporulation, spore germination and virulence. This Colletotrichum higginsianum (strain IMI 349063) (Crucifer anthracnose fungus) protein is COMPASS component cclA.